Reading from the N-terminus, the 473-residue chain is Photosystem II CP43 reaction center protein (473 aa).

Positions methionine 1 to glutamate 14 are excised as a propeptide. At threonine 15 the chain carries N-acetylthreonine. A Phosphothreonine modification is found at threonine 15. The next 5 membrane-spanning stretches (helical) occupy residues leucine 69–alanine 93, leucine 134–asparagine 155, lysine 178–threonine 200, lysine 255–serine 275, and tryptophan 291–alanine 312. A [CaMn4O5] cluster-binding site is contributed by glutamate 367. Residues arginine 447–proline 471 traverse the membrane as a helical segment.

The protein belongs to the PsbB/PsbC family. PsbC subfamily. PSII is composed of 1 copy each of membrane proteins PsbA, PsbB, PsbC, PsbD, PsbE, PsbF, PsbH, PsbI, PsbJ, PsbK, PsbL, PsbM, PsbT, PsbX, PsbY, PsbZ, Psb30/Ycf12, at least 3 peripheral proteins of the oxygen-evolving complex and a large number of cofactors. It forms dimeric complexes. Binds multiple chlorophylls and provides some of the ligands for the Ca-4Mn-5O cluster of the oxygen-evolving complex. It may also provide a ligand for a Cl- that is required for oxygen evolution. PSII binds additional chlorophylls, carotenoids and specific lipids. serves as cofactor.

The protein localises to the plastid. Its subcellular location is the chloroplast thylakoid membrane. One of the components of the core complex of photosystem II (PSII). It binds chlorophyll and helps catalyze the primary light-induced photochemical processes of PSII. PSII is a light-driven water:plastoquinone oxidoreductase, using light energy to abstract electrons from H(2)O, generating O(2) and a proton gradient subsequently used for ATP formation. The sequence is that of Photosystem II CP43 reaction center protein from Buxus microphylla (Littleleaf boxwood).